The following is a 361-amino-acid chain: 5-formaminoimidazole-4-carboxamide-1-(beta)-D-ribofuranosyl 5'-monophosphate synthetase (361 aa).

Residues H27 and S94 each coordinate 5-amino-1-(5-phospho-beta-D-ribosyl)imidazole-4-carboxamide. In terms of domain architecture, ATP-grasp spans 116–348; it reads RAILRWEAER…MGQRIAKEIK (233 aa). Residues 146–208 and E230 each bind ATP; that span reads PDDI…ANYC. N258 serves as a coordination point for 5-amino-1-(5-phospho-beta-D-ribosyl)imidazole-4-carboxamide. Mg(2+)-binding residues include Q297 and E310.

Belongs to the phosphohexose mutase family. Requires Mg(2+) as cofactor. Mn(2+) serves as cofactor.

The catalysed reaction is 5-amino-1-(5-phospho-beta-D-ribosyl)imidazole-4-carboxamide + formate + ATP = 5-formamido-1-(5-phospho-D-ribosyl)imidazole-4-carboxamide + ADP + phosphate. Its pathway is purine metabolism; IMP biosynthesis via de novo pathway; 5-formamido-1-(5-phospho-D-ribosyl)imidazole-4-carboxamide from 5-amino-1-(5-phospho-D-ribosyl)imidazole-4-carboxamide (formate route): step 1/1. Its function is as follows. Catalyzes the ATP- and formate-dependent formylation of 5-aminoimidazole-4-carboxamide-1-beta-d-ribofuranosyl 5'-monophosphate (AICAR) to 5-formaminoimidazole-4-carboxamide-1-beta-d-ribofuranosyl 5'-monophosphate (FAICAR) in the absence of folates. This chain is 5-formaminoimidazole-4-carboxamide-1-(beta)-D-ribofuranosyl 5'-monophosphate synthetase, found in Methanococcus maripaludis (strain C5 / ATCC BAA-1333).